The primary structure comprises 144 residues: Superoxide dismutase [Mn], mitochondrial (144 aa).

Residues H10, H58, and D143 each coordinate Mn(2+).

The protein belongs to the iron/manganese superoxide dismutase family. As to quaternary structure, homotetramer. It depends on Mn(2+) as a cofactor.

It localises to the mitochondrion matrix. The catalysed reaction is 2 superoxide + 2 H(+) = H2O2 + O2. In terms of biological role, destroys superoxide anion radicals which are normally produced within the cells and which are toxic to biological systems. The sequence is that of Superoxide dismutase [Mn], mitochondrial from Eptatretus stoutii (Pacific hagfish).